We begin with the raw amino-acid sequence, 1031 residues long: GTPase-activating protein DDB_G0291510 (1031 aa).

Positions Val-18–Asn-48 are disordered. The segment covering Asn-26 to Phe-41 has biased composition (polar residues). Residues Phe-186–Ile-404 form the Rap-GAP domain. The region spanning Asn-471 to Asn-881 is the CNH domain. The disordered stretch occupies residues Asn-920–Ile-950.

This chain is GTPase-activating protein DDB_G0291510, found in Dictyostelium discoideum (Social amoeba).